The chain runs to 309 residues: HPr kinase/phosphorylase (309 aa).

Active-site residues include histidine 138 and lysine 159. Residue 153–160 (GQSGVGKS) participates in ATP binding. Serine 160 contributes to the Mg(2+) binding site. Aspartate 177 serves as the catalytic Proton acceptor; for phosphorylation activity. Proton donor; for dephosphorylation activity. Positions 201-210 (LEIRGLGIIN) are important for the catalytic mechanism of both phosphorylation and dephosphorylation. Mg(2+) is bound at residue glutamate 202. Arginine 243 is a catalytic residue. Residues 264-269 (PVRPGR) are important for the catalytic mechanism of dephosphorylation.

The protein belongs to the HPrK/P family. In terms of assembly, homohexamer. It depends on Mg(2+) as a cofactor.

It catalyses the reaction [HPr protein]-L-serine + ATP = [HPr protein]-O-phospho-L-serine + ADP + H(+). It carries out the reaction [HPr protein]-O-phospho-L-serine + phosphate + H(+) = [HPr protein]-L-serine + diphosphate. Catalyzes the ATP- as well as the pyrophosphate-dependent phosphorylation of a specific serine residue in HPr, a phosphocarrier protein of the phosphoenolpyruvate-dependent sugar phosphotransferase system (PTS). HprK/P also catalyzes the pyrophosphate-producing, inorganic phosphate-dependent dephosphorylation (phosphorolysis) of seryl-phosphorylated HPr (P-Ser-HPr). The two antagonistic activities of HprK/P are regulated by several intracellular metabolites, which change their concentration in response to the absence or presence of rapidly metabolisable carbon sources (glucose, fructose, etc.) in the growth medium. Also phosphorylates/dephosphorylates the HPr-like catabolite repression protein crh on a specific serine residue. Therefore, by controlling the phosphorylation state of HPr and crh, HPrK/P is a sensor enzyme that plays a major role in the regulation of carbon metabolism and sugar transport: it mediates carbon catabolite repression (CCR), and regulates PTS-catalyzed carbohydrate uptake and inducer exclusion. The protein is HPr kinase/phosphorylase of Bacillus mycoides (strain KBAB4) (Bacillus weihenstephanensis).